The following is a 98-amino-acid chain: NADH-ubiquinone oxidoreductase chain 4L (98 aa).

Helical transmembrane passes span 1–21 (MPVV…GLLV), 29–49 (SLLC…VTVL), and 61–81 (IILL…LVMV).

Belongs to the complex I subunit 4L family. Core subunit of respiratory chain NADH dehydrogenase (Complex I) which is composed of 45 different subunits.

Its subcellular location is the mitochondrion inner membrane. It catalyses the reaction a ubiquinone + NADH + 5 H(+)(in) = a ubiquinol + NAD(+) + 4 H(+)(out). Its function is as follows. Core subunit of the mitochondrial membrane respiratory chain NADH dehydrogenase (Complex I) which catalyzes electron transfer from NADH through the respiratory chain, using ubiquinone as an electron acceptor. Part of the enzyme membrane arm which is embedded in the lipid bilayer and involved in proton translocation. The sequence is that of NADH-ubiquinone oxidoreductase chain 4L (MT-ND4L) from Ursus arctos (Brown bear).